The primary structure comprises 205 residues: Arginine exporter protein ArgO (205 aa).

6 consecutive transmembrane segments (helical) span residues 1–21 (MLAV…PLGP), 42–62 (LCAL…SALL), 67–87 (LLLA…GWGA), 111–131 (ILVT…DTFV), 147–167 (WFAL…AFLA), and 185–205 (LFVG…GFGL).

Belongs to the LysE/ArgO transporter (TC 2.A.75) family.

Its subcellular location is the cell inner membrane. It carries out the reaction L-arginine(in) = L-arginine(out). Its function is as follows. Involved in the export of arginine. Important to control the intracellular level of arginine and the correct balance between arginine and lysine. The sequence is that of Arginine exporter protein ArgO from Yersinia pseudotuberculosis serotype O:3 (strain YPIII).